The chain runs to 399 residues: Large envelope protein (399 aa).

Residue M1 is modified to N-acetylmethionine. The N-myristoyl glycine; by host moiety is linked to residue G2. Residues 2-118 form a pre-S1 region; the sequence is GLSWTVPLEW…PPLRDSHPQA (117 aa). Residues 2-173 form a pre-S region; it reads GLSWTVPLEW…FSRIGDPAPN (172 aa). The Virion surface; in external conformation portion of the chain corresponds to 2–180; it reads GLSWTVPLEW…APNMENITSG (179 aa). At 2–252 the chain is on the intravirion; in internal conformation side; sequence GLSWTVPLEW…PGYRWMCLRR (251 aa). S4 carries N-linked (GlcNAc...) asparagine glycosylation. Residues 69-117 are disordered; that stretch reads PHGGLLGWSPQSQGTLTTLPADPPPASTNRQSGRQPTPISPPLRDSHPQ. The interval 119–173 is pre-S2; it reads MQWNSTAFHQALQNPKVRGLYFPAGGSSSGIVNPVPTIASHISSIFSRIGDPAPN. Residues 181-201 form a helical membrane-spanning segment; it reads FLGPLLVLQAGFFLLTRILTI. Residues 202–252 are Intravirion; in external conformation-facing; it reads PQSLDSWWTSLNFLGGVPVCPGLNSQSPTSNHSPISCPPTCPGYRWMCLRR. The chain crosses the membrane as a helical span at residues 253–273; the sequence is FIIFLFILLLCLIFLLVLLDY. Residues 274 to 347 are Virion surface-facing; that stretch reads QGMLPVCPLI…WASVRFSWLS (74 aa). N-linked (GlcNAc...) asparagine; by host glycosylation occurs at N319. A helical transmembrane segment spans residues 348 to 368; that stretch reads LLVPFVQWFVGLSPTVWLSAI. Residues 369-374 are Intravirion-facing; sequence WMMWYW. Residues 375-397 traverse the membrane as a helical segment; it reads GPNLYNILSPFIPLLPIFFCLWV. Over 398–399 the chain is Virion surface; that stretch reads YI.

Belongs to the orthohepadnavirus major surface antigen family. As to quaternary structure, in its internal form (Li-HBsAg), interacts with the capsid protein and with the isoform S. Interacts with host chaperone CANX. Associates with host chaperone CANX through its pre-S2 N glycan; this association may be essential for isoform M proper secretion. In terms of assembly, interacts with isoform L. Interacts with the antigens of satellite virus HDV (HDVAgs); this interaction is required for encapsidation of HDV genomic RNA. Post-translationally, isoform M is N-terminally acetylated by host at a ratio of 90%, and N-glycosylated by host at the pre-S2 region. Myristoylated.

The protein localises to the virion membrane. The large envelope protein exists in two topological conformations, one which is termed 'external' or Le-HBsAg and the other 'internal' or Li-HBsAg. In its external conformation the protein attaches the virus to cell receptors and thereby initiating infection. This interaction determines the species specificity and liver tropism. This attachment induces virion internalization predominantly through caveolin-mediated endocytosis. The large envelope protein also assures fusion between virion membrane and endosomal membrane. In its internal conformation the protein plays a role in virion morphogenesis and mediates the contact with the nucleocapsid like a matrix protein. In terms of biological role, the middle envelope protein plays an important role in the budding of the virion. It is involved in the induction of budding in a nucleocapsid independent way. In this process the majority of envelope proteins bud to form subviral lipoprotein particles of 22 nm of diameter that do not contain a nucleocapsid. The sequence is that of Large envelope protein from Hepatitis B virus genotype G (isolate IG29227/2000) (HBV-G).